We begin with the raw amino-acid sequence, 248 residues long: Ribosomal RNA small subunit methyltransferase J (248 aa).

S-adenosyl-L-methionine-binding positions include 98–99 (RD), 114–115 (ER), 150–151 (SS), and D168.

Belongs to the methyltransferase superfamily. RsmJ family.

The protein localises to the cytoplasm. The catalysed reaction is guanosine(1516) in 16S rRNA + S-adenosyl-L-methionine = N(2)-methylguanosine(1516) in 16S rRNA + S-adenosyl-L-homocysteine + H(+). In terms of biological role, specifically methylates the guanosine in position 1516 of 16S rRNA. This is Ribosomal RNA small subunit methyltransferase J from Shewanella baltica (strain OS185).